Reading from the N-terminus, the 142-residue chain is Large ribosomal subunit protein bL17 (142 aa).

Belongs to the bacterial ribosomal protein bL17 family. Part of the 50S ribosomal subunit. Contacts protein L32.

The sequence is that of Large ribosomal subunit protein bL17 from Chlamydia muridarum (strain MoPn / Nigg).